Here is a 177-residue protein sequence, read N- to C-terminus: NADH-quinone oxidoreductase subunit B (177 aa).

C56, C57, C121, and C151 together coordinate [4Fe-4S] cluster.

Belongs to the complex I 20 kDa subunit family. As to quaternary structure, NDH-1 is composed of 14 different subunits. Subunits NuoB, C, D, E, F, and G constitute the peripheral sector of the complex. Requires [4Fe-4S] cluster as cofactor.

It localises to the cell inner membrane. It carries out the reaction a quinone + NADH + 5 H(+)(in) = a quinol + NAD(+) + 4 H(+)(out). NDH-1 shuttles electrons from NADH, via FMN and iron-sulfur (Fe-S) centers, to quinones in the respiratory chain. Couples the redox reaction to proton translocation (for every two electrons transferred, four hydrogen ions are translocated across the cytoplasmic membrane), and thus conserves the redox energy in a proton gradient. This is NADH-quinone oxidoreductase subunit B from Ruegeria pomeroyi (strain ATCC 700808 / DSM 15171 / DSS-3) (Silicibacter pomeroyi).